A 1050-amino-acid chain; its full sequence is Toll-like receptor 7 (1050 aa).

Positions 1–26 are cleaved as a signal peptide; the sequence is MVFSMWTRKRQILIFLNMLLVSRVFG. The Extracellular segment spans residues 27 to 837; the sequence is FRWFPKTLPC…SLDLYTCELD (811 aa). 20 LRR repeats span residues 42-64, 65-87, 89-111, 126-149, 151-170, 171-195, 203-226, 228-247, 248-273, 275-289, 290-312, 314-337, 339-364, 369-392, 396-419, 421-443, 493-516, 517-542, 543-565, and 567-589; these read IPEAHVIVDCTDKHLTEIPEGIP, TNTTNLTLTINHIPSISPDSFRR, NHLEEIDLRCNCVPVLLGSKANV, LSDLKALYLDGNQLLEIPQDLPSS, HLLSLEANNIFSITKENLTE, LVNIETLYLGQNCYYRNPCNVSYSI, MRNLKVLSLKDNNVTAVPTTLPPN, LELYLYNNIIKKIQENDFNN, LNELQVLDLSGNCPRCYNVPYPCTPC, NNSPLQIHDNAFNSL, TELKVLRLHSNSLQHVPPTWFKN, RNLQELDLSQNYLAREIEEAKFLH, LPNLVELDFSFNYELQVYHASITLPH, LENLKILRVKGYVFKELKNSSLSV, LPRLEVLDLGTNFIKIADLNIFKH, ENLKLIDLSVNKISPSEESREVG, HIYGQTLDLSRNNIFFIKPSDFQH, LSFLKCLNLSGNTIGQTLNGSELWPL, RELRYLDFSNNRLDLLYSTAFEE, and QSLEVLDLSSNSHYFQAEGITHM. Asn-66 and Asn-69 each carry an N-linked (GlcNAc...) asparagine glycan. Residues Asn-167, Asn-190, and Asn-215 are each glycosylated (N-linked (GlcNAc...) asparagine). Asn-387 is a glycosylation site (N-linked (GlcNAc...) asparagine). 2 N-linked (GlcNAc...) asparagine glycosylation sites follow: Asn-524 and Asn-535. N-linked (GlcNAc...) asparagine glycosylation is present at Asn-591. 8 LRR repeats span residues 596 to 619, 620 to 645, 650 to 673, 675 to 698, 699 to 722, 724 to 746, 747 to 770, and 773 to 796; these read LRLLDKLMMNDNDISTSASRTMES, DSLRILEFRGNHLDVLWRAGDNRYLD, LFNLEVLDISRNSLNSLPPEVFEG, PPNLKNLSLAKNGLKSFFWDRLQL, LKHLEILDLSHNQLTKVPERLANC, KSLTTLILKHNQIRQLTKYFLED, ALQLRYLDISSNKIQVIQKTSFPE, and LNNLEMLVLHHNRFLCNCDAVWFV. 2 N-linked (GlcNAc...) asparagine glycosylation sites follow: Asn-680 and Asn-721. The N-linked (GlcNAc...) asparagine glycan is linked to Asn-800. The helical transmembrane segment at 838–858 threads the bilayer; it reads LTNLILFSVSISSVLFLMVVM. At 859–1050 the chain is on the cytoplasmic side; the sequence is TTSHLFFWDM…AYSQMFKETV (192 aa). The 145-residue stretch at 890-1034 folds into the TIR domain; sequence SCYDAFIVYD…YFWQCLKNAL (145 aa).

The protein belongs to the Toll-like receptor family. Homodimer. Interacts with MYD88 via their respective TIR domains. Interacts with UNC93B1. Interacts with SMPDL3B. In terms of processing, the first cleavage is performed by asparagine endopeptidase or cathepsin family members. This initial cleavage event is followed by a trimming event that is solely cathepsin mediated and required for optimal receptor signaling.

The protein resides in the endosome membrane. It localises to the endoplasmic reticulum membrane. Its subcellular location is the lysosome. It is found in the cytoplasmic vesicle. The protein localises to the phagosome. Activated by guanosine analogs including deoxyguanosine, 7-thia-8-oxoguanosine or 7-deazaguanosine in a RNA-independent manner. In terms of biological role, endosomal receptor that plays a key role in innate and adaptive immunity. Controls host immune response against pathogens through recognition of uridine-containing single strand RNAs (ssRNAs) of viral origin or guanosine analogs. Upon binding to agonists, undergoes dimerization that brings TIR domains from the two molecules into direct contact, leading to the recruitment of TIR-containing downstream adapter MYD88 through homotypic interaction. In turn, the Myddosome signaling complex is formed involving IRAK4, IRAK1, TRAF6, TRAF3 leading to activation of downstream transcription factors NF-kappa-B and IRF7 to induce pro-inflammatory cytokines and interferons, respectively. In plasmacytoid dendritic cells, RNASET2 endonuclease cooperates with PLD3 or PLD4 5'-&gt;3' exonucleases to process RNA and release 2',3'-cyclic guanosine monophosphate (2',3'-cGMP) and cytidine-rich RNA fragments that occupy TLR7 ligand-binding pockets and trigger a signaling-competent state. The chain is Toll-like receptor 7 (Tlr7) from Mus musculus (Mouse).